The primary structure comprises 261 residues: Protein OSB1, mitochondrial (261 aa).

The N-terminal 28 residues, 1–28 (MNTFFKLGSLIQRTASQISSSFPKSRFF), are a transit peptide targeting the mitochondrion. In terms of domain architecture, SSB spans 55-155 (VNSVSLMGFV…VKVAEVNYVA (101 aa)). The tract at residues 189–238 (WQVFFSNPYDWWDNRRNKKNPKQPDFKHKDTGEALWLCSDLPDWITRRLE) is PDF region.

Expressed in root elongation zone and in gametophytic cells.

The protein resides in the mitochondrion. In terms of biological role, regulates mitochondrial DNA recombination. Represses homologous recombination, preventing mitochondrial genome instability and unbalanced transmission of alternative mtDNA configurations. Binds preferentially single-stranded DNA. Does not bind to RNA. The chain is Protein OSB1, mitochondrial (OSB1) from Arabidopsis thaliana (Mouse-ear cress).